The chain runs to 457 residues: Alkylcitrate synthase phiJ (457 aa).

Catalysis depends on residues His-328 and Asp-384.

The protein belongs to the citrate synthase family.

It catalyses the reaction (2E,10E)-dode-2,10-dicenoyl-CoA + oxaloacetate + H2O = (4E,11E)-2-hydroxytrideca-4,11-dien-1,2,3-tricarboxylate + CoA + H(+). It functions in the pathway secondary metabolite biosynthesis. In terms of biological role, alkylcitrate synthase; part of the gene cluster that mediates the biosynthesis of the antihypercholesterolemic agents phomoidrides which are dimeric anhydrides. Within the pathway, the alkylcitrate synthase (ACS) phiJ and the alkylcitrate dehydratase (ACDH) phiI produce the decarboxylated monomeric anhydrides by coupling the C12-fatty acyl product from phiA with oxalacetic acid. The pathway begins with the highly reducing polyketide synthase phiA that catalyzes the formation of a C12-fatty acyl-ACP, starting from one acetate and 5 malonate units. The hydrolase phiM is involved in the release of the C12-fatty acyl chain from phiA. The alkylcitrate synthase (ACS) phiJ and the alkylcitrate dehydratase (ACDH) phiI then give rise to decarboxylated monomeric anhydrides by coupling the C12-fatty acyl chain with oxalacetic acid. The cyclase phiC is responsible for the dimerization of the monomeric anhydrides which leads to the production of prephomoidride that contains the characteristic bicyclo[4.3.1]deca-1,6-diene system of phomoidrides. Iterative oxidation catalyzed by the alpha-ketoglutarate-dependent dioxygenase phiK produced then phomoidride A. Finally, the methyltransferase phiE converts phomoidride A to phomoidride B via an acetalization reaction. The phosphatidylethanolamine-binding protein phiB and phiN are not essential for dimerization and their functions have still to be determined. This Fungal sp. (strain ATCC 74256) protein is Alkylcitrate synthase phiJ.